We begin with the raw amino-acid sequence, 118 residues long: Small ribosomal subunit protein uS13 (118 aa).

Residues 93–118 (RSLPVRGQRSKTNARTRKGPRKPIKK) form a disordered region.

The protein belongs to the universal ribosomal protein uS13 family. Part of the 30S ribosomal subunit. Forms a loose heterodimer with protein S19. Forms two bridges to the 50S subunit in the 70S ribosome.

Its function is as follows. Located at the top of the head of the 30S subunit, it contacts several helices of the 16S rRNA. In the 70S ribosome it contacts the 23S rRNA (bridge B1a) and protein L5 of the 50S subunit (bridge B1b), connecting the 2 subunits; these bridges are implicated in subunit movement. Contacts the tRNAs in the A and P-sites. The polypeptide is Small ribosomal subunit protein uS13 (Teredinibacter turnerae (strain ATCC 39867 / T7901)).